A 175-amino-acid polypeptide reads, in one-letter code: Ribulose bisphosphate carboxylase small subunit, chloroplastic (175 aa).

A chloroplast-targeting transit peptide spans 1-34 (MSFATTNKTIVPCATTKQIVRPRFLSNGTISKSR).

The protein belongs to the RuBisCO small chain family. In terms of assembly, heterohexadecamer of 8 large and 8 small subunits.

Its subcellular location is the plastid. It localises to the chloroplast. Its function is as follows. RuBisCO catalyzes two reactions: the carboxylation of D-ribulose 1,5-bisphosphate, the primary event in carbon dioxide fixation, as well as the oxidative fragmentation of the pentose substrate. Both reactions occur simultaneously and in competition at the same active site. Although the small subunit is not catalytic it is essential for maximal activity. This chain is Ribulose bisphosphate carboxylase small subunit, chloroplastic, found in Batophora oerstedii (Green alga).